The following is a 126-amino-acid chain: Glycine cleavage system H protein (126 aa).

The region spanning 23–105 (AATVGITDHA…YGEGWLLRVR (83 aa)) is the Lipoyl-binding domain. The residue at position 64 (lysine 64) is an N6-lipoyllysine.

It belongs to the GcvH family. The glycine cleavage system is composed of four proteins: P, T, L and H. (R)-lipoate serves as cofactor.

Functionally, the glycine cleavage system catalyzes the degradation of glycine. The H protein shuttles the methylamine group of glycine from the P protein to the T protein. This is Glycine cleavage system H protein from Rubrobacter xylanophilus (strain DSM 9941 / JCM 11954 / NBRC 16129 / PRD-1).